The primary structure comprises 461 residues: D-phenylhydantoinase (461 aa).

A divalent metal cation-binding residues include histidine 59, histidine 61, and lysine 151. Residue lysine 151 is modified to N6-carboxylysine. Tyrosine 156 contacts substrate. Residues histidine 182 and histidine 239 each contribute to the a divalent metal cation site. Residue serine 286 participates in substrate binding. Residue aspartate 313 coordinates a divalent metal cation. Residue asparagine 335 participates in substrate binding.

It belongs to the metallo-dependent hydrolases superfamily. Hydantoinase/dihydropyrimidinase family. In terms of assembly, homotetramer. Requires a divalent metal cation as cofactor. Carboxylation allows a single lysine to coordinate two divalent metal cations.

It carries out the reaction D-5-phenylhydantoin + H2O = N-carbamoyl-D-phenylglycine + H(+). Functionally, catalyzes the stereospecific hydrolysis of the cyclic amide bond of D-hydantoin derivatives with an aromatic side chains at the 5'-position. Has no activity on dihydropyrimidines. The physiological function is unknown. In Escherichia coli O17:K52:H18 (strain UMN026 / ExPEC), this protein is D-phenylhydantoinase.